A 243-amino-acid polypeptide reads, in one-letter code: Protein GrpE (243 aa).

This sequence belongs to the GrpE family. Homodimer.

The protein resides in the cytoplasm. Functionally, participates actively in the response to hyperosmotic and heat shock by preventing the aggregation of stress-denatured proteins, in association with DnaK and GrpE. It is the nucleotide exchange factor for DnaK and may function as a thermosensor. Unfolded proteins bind initially to DnaJ; upon interaction with the DnaJ-bound protein, DnaK hydrolyzes its bound ATP, resulting in the formation of a stable complex. GrpE releases ADP from DnaK; ATP binding to DnaK triggers the release of the substrate protein, thus completing the reaction cycle. Several rounds of ATP-dependent interactions between DnaJ, DnaK and GrpE are required for fully efficient folding. This chain is Protein GrpE, found in Mycoplasma mobile (strain ATCC 43663 / 163K / NCTC 11711) (Mesomycoplasma mobile).